Reading from the N-terminus, the 212-residue chain is Ribosomal RNA large subunit methyltransferase E (212 aa).

Glycine 57, tryptophan 59, aspartate 77, aspartate 93, and aspartate 122 together coordinate S-adenosyl-L-methionine. Lysine 162 (proton acceptor) is an active-site residue.

This sequence belongs to the class I-like SAM-binding methyltransferase superfamily. RNA methyltransferase RlmE family.

The protein localises to the cytoplasm. The catalysed reaction is uridine(2552) in 23S rRNA + S-adenosyl-L-methionine = 2'-O-methyluridine(2552) in 23S rRNA + S-adenosyl-L-homocysteine + H(+). Functionally, specifically methylates the uridine in position 2552 of 23S rRNA at the 2'-O position of the ribose in the fully assembled 50S ribosomal subunit. This chain is Ribosomal RNA large subunit methyltransferase E, found in Coxiella burnetii (strain RSA 493 / Nine Mile phase I).